The primary structure comprises 293 residues: Phosphoribosylaminoimidazole-succinocarboxamide synthase (293 aa).

Belongs to the SAICAR synthetase family.

The enzyme catalyses 5-amino-1-(5-phospho-D-ribosyl)imidazole-4-carboxylate + L-aspartate + ATP = (2S)-2-[5-amino-1-(5-phospho-beta-D-ribosyl)imidazole-4-carboxamido]succinate + ADP + phosphate + 2 H(+). The protein operates within purine metabolism; IMP biosynthesis via de novo pathway; 5-amino-1-(5-phospho-D-ribosyl)imidazole-4-carboxamide from 5-amino-1-(5-phospho-D-ribosyl)imidazole-4-carboxylate: step 1/2. This Bordetella petrii (strain ATCC BAA-461 / DSM 12804 / CCUG 43448) protein is Phosphoribosylaminoimidazole-succinocarboxamide synthase.